The primary structure comprises 270 residues: Cerberus (270 aa).

An N-terminal signal peptide occupies residues 1–20 (MLLNVLRICIIVCLVNDGAG). Residues Asn-103, Asn-112, and Asn-154 are each glycosylated (N-linked (GlcNAc...) asparagine). 4 disulfides stabilise this stretch: Cys-169-Cys-215, Cys-183-Cys-229, Cys-193-Cys-245, and Cys-197-Cys-247. Residues 169–253 (CKTLPFTQNI…ECTCEAHKSN (85 aa)) enclose the CTCK domain. N-linked (GlcNAc...) asparagine glycosylation is present at Asn-228.

Belongs to the DAN family. As to quaternary structure, the long chain interacts with nodal/nr-1, bmp4 and wnt8, thereby inhibiting their function. The short chain interacts with nodal/nr-1 but not bmp4 or wnt8. A component of the Nieuwkoop signaling center in the blastula. Expressed transiently in a broad anterior domain of the gastrula, including the anterior endoderm of the Spemann's organizer and more laterally the cardiac primordia. Expression is excluded from the prospective prechordal plate region and the ring of cells that give rise to the trunk-tail mesoderm.

It localises to the secreted. Functionally, inhibits wnt, nodal/nr-1 and bmp signaling in the embryo to promote head formation and anterior neural induction. Within the endoderm, acts as an essential mediator of nodal/nr-1-induced cardiogenesis in the overlying mesoderm. The sequence is that of Cerberus from Xenopus laevis (African clawed frog).